The sequence spans 319 residues: Melanoma-associated antigen B2 (319 aa).

A compositionally biased stretch (basic residues) spans 1-17 (MPRGQKSKLRAREKRRK). A disordered region spans residues 1–112 (MPRGQKSKLR…TKSPSEDPLT (112 aa)). Low complexity-rich tracts occupy residues 39-57 (PCCSSSVSGGAASSSPAAG), 67-79 (TTAAAAAAGVSST), and 94-105 (ASSSQASTSTKS). Ser-77 and Ser-105 each carry phosphoserine. The MAGE domain maps to 111-310 (LTRKSGSLVQ…CAFPTHYEEA (200 aa)).

Interacts with TRIM28. In terms of tissue distribution, expressed in testis and placenta, and in a significant fraction of tumors of various histologic types.

Its function is as follows. May enhance ubiquitin ligase activity of RING-type zinc finger-containing E3 ubiquitin-protein ligases. Proposed to act through recruitment and/or stabilization of the Ubl-conjugating enzyme (E2) at the E3:substrate complex. This is Melanoma-associated antigen B2 (MAGEB2) from Homo sapiens (Human).